Consider the following 284-residue polypeptide: 4-hydroxybenzoate octaprenyltransferase (284 aa).

A run of 8 helical transmembrane segments spans residues 18–38 (PIGTLLLLWPTLWALIIAAEG), 42–62 (WHVLLVFVLGVVLMRSAGCVI), 93–113 (IILFLLLGISSFLLVLTMNPL), 136–156 (HLPQLFLGLAFSWAIPMAWAA), 161–181 (LPWVVWFVFAINALWTIAYDT), 209–229 (LIIGLLQLLTLVMLVWLGLHY), 233–253 (QSFYWSVLAAGALFVYQQHLI), and 264–284 (AFLNNNYVGMVLALGLFVAFW).

Belongs to the UbiA prenyltransferase family. Mg(2+) serves as cofactor.

The protein localises to the cell inner membrane. It carries out the reaction all-trans-octaprenyl diphosphate + 4-hydroxybenzoate = 4-hydroxy-3-(all-trans-octaprenyl)benzoate + diphosphate. The protein operates within cofactor biosynthesis; ubiquinone biosynthesis. Its function is as follows. Catalyzes the prenylation of para-hydroxybenzoate (PHB) with an all-trans polyprenyl group. Mediates the second step in the final reaction sequence of ubiquinone-8 (UQ-8) biosynthesis, which is the condensation of the polyisoprenoid side chain with PHB, generating the first membrane-bound Q intermediate 3-octaprenyl-4-hydroxybenzoate. In Vibrio vulnificus (strain CMCP6), this protein is 4-hydroxybenzoate octaprenyltransferase.